Consider the following 225-residue polypeptide: Glutathione S-transferase Mu 3 (225 aa).

In terms of domain architecture, GST N-terminal spans 5–92 (SSMVLGYWDI…YIARKHNMCG (88 aa)). Residues 11–12 (YW), 50–54 (WLDVK), and 63–64 (NL) each bind glutathione. Residue Lys-54 forms a Glycyl lysine isopeptide (Lys-Gly) (interchain with G-Cter in SUMO2) linkage. Residue Lys-73 forms a Glycyl lysine isopeptide (Lys-Gly) (interchain with G-Cter in SUMO2) linkage. Residue 76–77 (QS) participates in glutathione binding. A GST C-terminal domain is found at 94–212 (TEEEKIRVDI…QSDQFCKMPI (119 aa)). Residue Tyr-120 participates in substrate binding.

Belongs to the GST superfamily. Mu family. Homodimer. The N-terminus is blocked. In terms of tissue distribution, testis and brain.

It is found in the cytoplasm. The enzyme catalyses RX + glutathione = an S-substituted glutathione + a halide anion + H(+). Conjugation of reduced glutathione to a wide number of exogenous and endogenous hydrophobic electrophiles. May govern uptake and detoxification of both endogenous compounds and xenobiotics at the testis and brain blood barriers. This chain is Glutathione S-transferase Mu 3 (GSTM3), found in Homo sapiens (Human).